A 108-amino-acid chain; its full sequence is Synaptobrevin-1 (108 aa).

The disordered stretch occupies residues 1–25 (MDAQGDAGAQGGSQGPRPSNKRLQQ). Residues 1 to 85 (MDAQGDAGAQ…KRKYWWKNIK (85 aa)) are Cytoplasmic-facing. The region spanning 22-82 (RLQQTQAQVD…ATLKRKYWWK (61 aa)) is the v-SNARE coiled-coil homology domain. A helical; Anchor for type IV membrane protein membrane pass occupies residues 86 to 106 (MMIIMCAIVVILIIIIVLWAG). Residues 107–108 (GK) lie on the Extracellular side of the membrane.

This sequence belongs to the synaptobrevin family. As to quaternary structure, part of the SNARE core complex containing CBG09569/SNAP25, snb-1/VAMP2 and CBG03570/STX1A. This complex binds to cpx-1/CPLX1.

The protein localises to the cytoplasmic vesicle. Its subcellular location is the secretory vesicle. It is found in the synaptic vesicle membrane. The protein resides in the cell membrane. It localises to the synapse. The protein localises to the synaptosome. Its function is as follows. Involved in the targeting and/or fusion of transport vesicles to their target membrane. Acts in neuronal exocytosis of synaptic transmission. Likely to have a role in cholinergic transmisson. Required for viability, coordinated movement and M3 pharynx motor neuron function. The polypeptide is Synaptobrevin-1 (Caenorhabditis briggsae).